An 80-amino-acid chain; its full sequence is N-V protease (80 aa).

Belongs to the peptidase S8 family. As to quaternary structure, monomer. Body cavity.

Its subcellular location is the secreted. Its activity is regulated as follows. Inhibited by the serine protease inhibitors DFP, PMSF and TLCK. Not inhibited by the serine protease inhibitors aprotinin, elastinal, SBTI and benzamidine, the cysteine protease inhibitors iodoacetate and E64, or the metalloprotease inhibitors EDTA and EGTA. Its function is as follows. Serine protease. Hydrolyzes the alpha chains of fibrin and fibrinogen completely, has lower activity on the beta and gamma chains of fibrin and fibrinogen. The protein is N-V protease of Alitta virens (Sandworm).